We begin with the raw amino-acid sequence, 245 residues long: tRNA (guanine-N(1)-)-methyltransferase (245 aa).

S-adenosyl-L-methionine-binding positions include G113 and 133 to 138; that span reads IGDYVL.

The protein belongs to the RNA methyltransferase TrmD family. In terms of assembly, homodimer.

The protein resides in the cytoplasm. It carries out the reaction guanosine(37) in tRNA + S-adenosyl-L-methionine = N(1)-methylguanosine(37) in tRNA + S-adenosyl-L-homocysteine + H(+). Functionally, specifically methylates guanosine-37 in various tRNAs. This chain is tRNA (guanine-N(1)-)-methyltransferase, found in Anoxybacillus flavithermus (strain DSM 21510 / WK1).